A 257-amino-acid chain; its full sequence is NAD-capped RNA hydrolase NudC (257 aa).

Arg69 provides a ligand contact to substrate. 2 residues coordinate Zn(2+): Cys98 and Cys101. A substrate-binding site is contributed by Glu111. Residues Cys116 and Cys119 each coordinate Zn(2+). Position 124 (Tyr124) interacts with substrate. In terms of domain architecture, Nudix hydrolase spans 125–248 (PQIAPCIIVA…TVARRLIEDT (124 aa)). Residues Ala158, Glu174, and Glu178 each contribute to the a divalent metal cation site. The short motif at 159 to 180 (GFVEVGETLEQAVAREVMEESG) is the Nudix box element. Substrate is bound at residue 192–199 (QPWPFPQS). Glu219 provides a ligand contact to a divalent metal cation. Ala241 contributes to the substrate binding site.

Belongs to the Nudix hydrolase family. NudC subfamily. In terms of assembly, homodimer. It depends on Mg(2+) as a cofactor. Requires Mn(2+) as cofactor. Zn(2+) is required as a cofactor.

The enzyme catalyses a 5'-end NAD(+)-phospho-ribonucleoside in mRNA + H2O = a 5'-end phospho-adenosine-phospho-ribonucleoside in mRNA + beta-nicotinamide D-ribonucleotide + 2 H(+). It carries out the reaction NAD(+) + H2O = beta-nicotinamide D-ribonucleotide + AMP + 2 H(+). The catalysed reaction is NADH + H2O = reduced beta-nicotinamide D-ribonucleotide + AMP + 2 H(+). MRNA decapping enzyme that specifically removes the nicotinamide adenine dinucleotide (NAD) cap from a subset of mRNAs by hydrolyzing the diphosphate linkage to produce nicotinamide mononucleotide (NMN) and 5' monophosphate mRNA. The NAD-cap is present at the 5'-end of some mRNAs and stabilizes RNA against 5'-processing. Has preference for mRNAs with a 5'-end purine. Catalyzes the hydrolysis of a broad range of dinucleotide pyrophosphates. This chain is NAD-capped RNA hydrolase NudC, found in Klebsiella pneumoniae (strain 342).